The following is a 556-amino-acid chain: Phosphoacetylglucosamine mutase (556 aa).

Catalysis depends on serine 68, which acts as the Phosphoserine intermediate. Mg(2+) is bound by residues serine 68, aspartate 286, aspartate 288, and aspartate 290. Phosphoserine is present on serine 68. Residues 386-388, 518-522, and arginine 527 each bind substrate; these read EAN and RPSGT.

It belongs to the phosphohexose mutase family. It depends on Mg(2+) as a cofactor.

The catalysed reaction is N-acetyl-alpha-D-glucosamine 1-phosphate = N-acetyl-D-glucosamine 6-phosphate. It participates in nucleotide-sugar biosynthesis; UDP-N-acetyl-alpha-D-glucosamine biosynthesis; N-acetyl-alpha-D-glucosamine 1-phosphate from alpha-D-glucosamine 6-phosphate (route I): step 2/2. Interconverts GlcNAc-6-P and GlcNAc-1-P. In Arabidopsis thaliana (Mouse-ear cress), this protein is Phosphoacetylglucosamine mutase (DRT101).